The chain runs to 321 residues: Aspartate carbamoyltransferase catalytic subunit (321 aa).

Residues arginine 57 and threonine 58 each contribute to the carbamoyl phosphate site. Lysine 85 provides a ligand contact to L-aspartate. Carbamoyl phosphate contacts are provided by arginine 107, histidine 142, and glutamine 145. Residues arginine 175 and arginine 229 each coordinate L-aspartate. 2 residues coordinate carbamoyl phosphate: glycine 270 and proline 271.

It belongs to the aspartate/ornithine carbamoyltransferase superfamily. ATCase family. Heterododecamer (2C3:3R2) of six catalytic PyrB chains organized as two trimers (C3), and six regulatory PyrI chains organized as three dimers (R2).

It catalyses the reaction carbamoyl phosphate + L-aspartate = N-carbamoyl-L-aspartate + phosphate + H(+). Its pathway is pyrimidine metabolism; UMP biosynthesis via de novo pathway; (S)-dihydroorotate from bicarbonate: step 2/3. Functionally, catalyzes the condensation of carbamoyl phosphate and aspartate to form carbamoyl aspartate and inorganic phosphate, the committed step in the de novo pyrimidine nucleotide biosynthesis pathway. In Mycobacterium leprae (strain TN), this protein is Aspartate carbamoyltransferase catalytic subunit.